We begin with the raw amino-acid sequence, 420 residues long: Tyrosine--tRNA ligase (420 aa).

Tyrosine 38 is an L-tyrosine binding site. The 'HIGH' region signature appears at 43–52 (PTGDSLHIGH). Residues tyrosine 169 and glutamine 173 each coordinate L-tyrosine. A 'KMSKS' region motif is present at residues 231-235 (KFGKS). Lysine 234 contributes to the ATP binding site. Positions 353 to 419 (KNIVEFLVET…GKRKYTLVKI (67 aa)) constitute an S4 RNA-binding domain.

The protein belongs to the class-I aminoacyl-tRNA synthetase family. TyrS type 1 subfamily. Homodimer.

The protein resides in the cytoplasm. It carries out the reaction tRNA(Tyr) + L-tyrosine + ATP = L-tyrosyl-tRNA(Tyr) + AMP + diphosphate + H(+). Its function is as follows. Catalyzes the attachment of tyrosine to tRNA(Tyr) in a two-step reaction: tyrosine is first activated by ATP to form Tyr-AMP and then transferred to the acceptor end of tRNA(Tyr). In Lactobacillus johnsonii (strain CNCM I-12250 / La1 / NCC 533), this protein is Tyrosine--tRNA ligase.